The following is a 325-amino-acid chain: Histone-lysine N-methyltransferase ATXR4 (325 aa).

A signal peptide spans 1–30 (MSRLALNRYSRCFSRLKTLTTPLFFSSSAA). Residues 42–295 (PPIRVGLTES…EGEELRICYI (254 aa)) enclose the SET domain.

It belongs to the class V-like SAM-binding methyltransferase superfamily. Histone-lysine methyltransferase family. TRX/MLL subfamily.

It is found in the nucleus. It carries out the reaction L-lysyl-[histone] + S-adenosyl-L-methionine = N(6)-methyl-L-lysyl-[histone] + S-adenosyl-L-homocysteine + H(+). Its function is as follows. Histone methyltransferase. The polypeptide is Histone-lysine N-methyltransferase ATXR4 (ATXR4) (Arabidopsis thaliana (Mouse-ear cress)).